A 705-amino-acid chain; its full sequence is Calpastatin (705 aa).

2 disordered regions span residues 1-211 and 226-493; these read MNPT…PNDA and LTTC…PLPP. Composition is skewed to basic and acidic residues over residues 7 to 17 and 24 to 62; these read KAVKTEPEKKP and VVHE…EKAV. Residue Lys10 forms a Glycyl lysine isopeptide (Lys-Gly) (interchain with G-Cter in SUMO2) linkage. Residue Lys28 is modified to N6-acetyllysine. Composition is skewed to low complexity over residues 63–72 and 94–103; these read SKSSEQPPSE and PAAAAAASAE. Residue Ser65 is modified to Phosphoserine. A Phosphothreonine modification is found at Thr115. Positions 135 to 151 are enriched in acidic residues; sequence TALDDLIDTLGEPEEMK. The stretch at 149–202 is one Inhibitory domain 1 repeat; it reads EMKEDNTTYTGPEVSDPMSSTYIEELGKRESTPPPKYKELLNKEEGIAGPPPDS. The segment covering 173–194 has biased composition (basic and acidic residues); it reads ELGKRESTPPPKYKELLNKEEG. Phosphoserine occurs at positions 202 and 230. Basic and acidic residues predominate over residues 234–248; the sequence is DGKETEKEKSTEEAL. Positions 275 to 286 are enriched in polar residues; it reads TEQALQALSASL. Basic and acidic residues-rich tracts occupy residues 289–317 and 327–352; these read RKPE…KKCG and YRLK…KPLS. One copy of the Inhibitory domain 2 repeat lies at 292-344; it reads EPELDPSSIREVDEAKAKEEKVKKCGEDEETVPSEYRLKPATDKDGKPLLPEA. A phosphoserine mark is found at Ser352, Ser354, and Ser361. The segment covering 355-364 has biased composition (acidic residues); that stretch reads ELIDELSEDF. The span at 365–381 shows a compositional bias: basic and acidic residues; the sequence is DQSKPTEKQSKPTEKTE. Ser428 is modified (phosphoserine). The span at 430–489 shows a compositional bias: basic and acidic residues; that stretch reads PKKEADPEDGKPVEDKVKEKAKEEDRENFGEKEETIPPDYRLEEAKDKDGKPLLPKEVKE. The Inhibitory domain 3 repeat unit spans residues 434 to 487; that stretch reads ADPEDGKPVEDKVKEKAKEEDRENFGEKEETIPPDYRLEEAKDKDGKPLLPKEV. Ser504 and Ser515 each carry phosphoserine. Residues 527–705 form a disordered region; it reads VSEVVSQTPA…KPKADGKSTS (179 aa). A compositionally biased stretch (low complexity) spans 533 to 542; the sequence is QTPAPTTQAA. At Ser563 the chain carries Phosphoserine. An Inhibitory domain 4 repeat occupies 571–624; that stretch reads PDPDENKPVEDKVKEKAKAEHRDKLGERDDTIPPKYQHLLDDNKEGTPGKPKDQ. Residues 571-625 show a composition bias toward basic and acidic residues; sequence PDPDENKPVEDKVKEKAKAEHRDKLGERDDTIPPKYQHLLDDNKEGTPGKPKDQR. Positions 651 to 662 are enriched in low complexity; sequence DSCPSTTETSTD. Residues 683–705 are compositionally biased toward basic and acidic residues; that stretch reads KAKDSTKAKEETSKPKADGKSTS.

It belongs to the protease inhibitor I27 (calpastatin) family.

Specific inhibition of calpain (calcium-dependent cysteine protease). Plays a key role in postmortem tenderization of meat and have been proposed to be involved in muscle protein degradation in living tissue. The chain is Calpastatin (CAST) from Bos taurus (Bovine).